We begin with the raw amino-acid sequence, 338 residues long: Tetraacyldisaccharide 4'-kinase (338 aa).

63-70 (TVGGSGKT) contacts ATP.

It belongs to the LpxK family.

It carries out the reaction a lipid A disaccharide + ATP = a lipid IVA + ADP + H(+). It participates in glycolipid biosynthesis; lipid IV(A) biosynthesis; lipid IV(A) from (3R)-3-hydroxytetradecanoyl-[acyl-carrier-protein] and UDP-N-acetyl-alpha-D-glucosamine: step 6/6. Transfers the gamma-phosphate of ATP to the 4'-position of a tetraacyldisaccharide 1-phosphate intermediate (termed DS-1-P) to form tetraacyldisaccharide 1,4'-bis-phosphate (lipid IVA). The protein is Tetraacyldisaccharide 4'-kinase of Shewanella loihica (strain ATCC BAA-1088 / PV-4).